The following is a 302-amino-acid chain: Putative 2-dehydro-3-deoxy-D-gluconate aldolase YagE (302 aa).

Active-site charge relay system residues include serine 49 and tyrosine 112. The active-site Proton donor is the tyrosine 138. Catalysis depends on lysine 167, which acts as the Schiff-base intermediate with substrate.

This sequence belongs to the DapA family. As to quaternary structure, a dimer of dimers.

Its subcellular location is the cytoplasm. The enzyme catalyses 2-dehydro-3-deoxy-D-gluconate = D-glyceraldehyde + pyruvate. It carries out the reaction 2-dehydro-3-deoxy-D-arabinonate = glycolaldehyde + pyruvate. In terms of biological role, catalyzes the formation of 2-keto-3-deoxy-gluconate (KDG) from pyruvate and glyceraldehyde. May also function as a 2-dehydro-3-deoxy-D-pentonate aldolase. Overexpression leads to increased growth (over 2 hours) in the presence of the antibiotics norfloxacin, ampicillin and streptomycin. This chain is Putative 2-dehydro-3-deoxy-D-gluconate aldolase YagE (yagE), found in Escherichia coli (strain K12).